Reading from the N-terminus, the 116-residue chain is Protein Rev (116 aa).

A phosphoserine; by host CK2 mark is found at S5 and S8. Positions 18 to 26 (LIKFLYQSN) are homomultimerization. The interval 23–48 (YQSNPPPSPEGTRQARRNRRRRWRAR) is disordered. The short motif at 34–50 (TRQARRNRRRRWRARQR) is the Nuclear localization signal and RNA-binding (RRE) element. Positions 36 to 48 (QARRNRRRRWRAR) are enriched in basic residues. The short motif at 73-84 (LQLPPLERLNLN) is the Nuclear export signal and binding to XPO1 element. Positions 90-116 (GTSGTQGVGSPQIPVEPPAVLESGTEE) are disordered. Phosphoserine; by host occurs at positions 92 and 99.

The protein belongs to the HIV-1 REV protein family. In terms of assembly, homomultimer; when bound to the RRE. Multimeric assembly is essential for activity and may involve XPO1. Binds to human KPNB1, XPO1, TNPO1, RANBP5 and IPO7. Interacts with the viral Integrase. Interacts with human KHDRBS1. Interacts with human NAP1; this interaction decreases Rev multimerization and stimulates its activity. Interacts with human DEAD-box helicases DDX3 and DDX24; these interactions may serve for viral RNA export to the cytoplasm and packaging, respectively. Interacts with human PSIP1; this interaction may inhibit HIV-1 DNA integration by promoting dissociation of the Integrase-LEDGF/p75 complex. Asymmetrically arginine dimethylated at one site by host PRMT6. Methylation impairs the RNA-binding activity and export of viral RNA from the nucleus to the cytoplasm. Post-translationally, phosphorylated by protein kinase CK2. Presence of, and maybe binding to the N-terminus of the regulatory beta subunit of CK2 is necessary for CK2-mediated Rev's phosphorylation.

Its subcellular location is the host nucleus. The protein resides in the host nucleolus. It is found in the host cytoplasm. In terms of biological role, escorts unspliced or incompletely spliced viral pre-mRNAs (late transcripts) out of the nucleus of infected cells. These pre-mRNAs carry a recognition sequence called Rev responsive element (RRE) located in the env gene, that is not present in fully spliced viral mRNAs (early transcripts). This function is essential since most viral proteins are translated from unspliced or partially spliced pre-mRNAs which cannot exit the nucleus by the pathway used by fully processed cellular mRNAs. Rev itself is translated from a fully spliced mRNA that readily exits the nucleus. Rev's nuclear localization signal (NLS) binds directly to KPNB1/Importin beta-1 without previous binding to KPNA1/Importin alpha-1. KPNB1 binds to the GDP bound form of RAN (Ran-GDP) and targets Rev to the nucleus. In the nucleus, the conversion from Ran-GDP to Ran-GTP dissociates Rev from KPNB1 and allows Rev's binding to the RRE in viral pre-mRNAs. Rev multimerization on the RRE via cooperative assembly exposes its nuclear export signal (NES) to the surface. Rev can then form a complex with XPO1/CRM1 and Ran-GTP, leading to nuclear export of the complex. Conversion from Ran-GTP to Ran-GDP mediates dissociation of the Rev/RRE/XPO1/RAN complex, so that Rev can return to the nucleus for a subsequent round of export. Beside KPNB1, also seems to interact with TNPO1/Transportin-1, RANBP5/IPO5 and IPO7/RANBP7 for nuclear import. The nucleoporin-like HRB/RIP is an essential cofactor that probably indirectly interacts with Rev to release HIV RNAs from the perinuclear region to the cytoplasm. The sequence is that of Protein Rev from Homo sapiens (Human).